Consider the following 397-residue polypeptide: Translocase of chloroplast 34 homolog, chloroplastic (397 aa).

Residues 1–72 (MAQPPRPAEE…SQPWAGLNRL (72 aa)) are disordered. Acidic residues-rich tracts occupy residues 10–32 (EYDD…DDES) and 44–63 (AGDE…DEDS). The AIG1-type G domain maps to 90-321 (RKQLTVLLLG…YKYHPRLSSK (232 aa)). The interval 99 to 106 (GKSSVGKS) is G1. GTP is bound by residues 102–107 (SVGKSS) and 121–126 (QAFKLQ). Serine 106 lines the Mg(2+) pocket. Positions 121–124 (QAFK) are homodimerization. Positions 126-130 (QADTD) are G2. Residues 155 to 158 (DTCG) are G3. Residues 193–198 (RLDLYR) form a homodimerization region. Positions 227–230 (THAN) are G4. GTP contacts are provided by residues histidine 228 and 271–272 (EN). Residues 271–273 (ENS) are G5. Residues 329–349 (LLPVAIAAEVLFYRRFLHPRL) traverse the membrane as a helical segment. The AKR2A-binding sequence (ABS) required for chloroplast outer envelope membrane targeting motif lies at 350 to 358 (DDNQRRVER).

This sequence belongs to the TRAFAC class TrmE-Era-EngA-EngB-Septin-like GTPase superfamily. AIG1/Toc34/Toc159-like paraseptin GTPase family. TOC34 subfamily. As to quaternary structure, homodimer, heterodimer with other TOC proteins, and monomer. Part of the TOC core complex that includes 1 protein for the specific recognition of transit peptides surrounded by a ring composed of four proteins forming translocation channels, and four to five GTP-binding proteins providing energy. This core complex can interact with components of the TIC complex to form a larger import complex. Interacts with ARSA1. The cofactor is Mg(2+).

Its subcellular location is the plastid. The protein resides in the chloroplast outer membrane. In terms of biological role, GTPase involved in protein precursor import into chloroplasts. Seems to recognize chloroplast-destined precursor proteins and regulate their presentation to the translocation channel through GTP hydrolysis. Functions as an essential component of the outer chloroplast membrane translocon (TOC) complex, which, in turn, catalyzes the import of nucleus-encoded precursor polypeptides from the cytoplasm to the chloroplast. This chain is Translocase of chloroplast 34 homolog, chloroplastic, found in Chlamydomonas reinhardtii (Chlamydomonas smithii).